The sequence spans 442 residues: ATP-dependent RNA helicase SUB2-2 (442 aa).

The Q motif signature appears at Thr58 to Gln86. The region spanning Ile89–Ile264 is the Helicase ATP-binding domain. Ala102–Thr109 is an ATP binding site. Residues Asp211 to Asp214 carry the DECD box motif. One can recognise a Helicase C-terminal domain in the interval Lys292 to Ser437.

Belongs to the DEAD box helicase family. DECD subfamily.

The protein localises to the nucleus. It carries out the reaction ATP + H2O = ADP + phosphate + H(+). Functionally, ATP-binding RNA helicase involved in transcription elongation and required for the export of mRNA out of the nucleus. SUB2 also plays a role in pre-mRNA splicing and spliceosome assembly. May be involved in rDNA and telomeric silencing, and maintenance of genome integrity. The sequence is that of ATP-dependent RNA helicase SUB2-2 (SUB2-2) from Vanderwaltozyma polyspora (strain ATCC 22028 / DSM 70294 / BCRC 21397 / CBS 2163 / NBRC 10782 / NRRL Y-8283 / UCD 57-17) (Kluyveromyces polysporus).